Consider the following 491-residue polypeptide: Transmembrane protein 200A (491 aa).

Topologically, residues 1–61 (MIATGGVITG…RGKIRLYSPS (61 aa)) are cytoplasmic. Positions 16–41 (RQDSARSQQHVNLSPSPATQEKKPIR) are disordered. The segment covering 20–34 (ARSQQHVNLSPSPAT) has biased composition (polar residues). The chain crosses the membrane as a helical span at residues 62–82 (GFFLILGVLISIIGIAMAVLG). Over 83–126 (YWPQKEHFIDAETTLSTNETQVIRNEGGVVVRFFEQHLHSDKMK) the chain is Extracellular. A glycan (N-linked (GlcNAc...) asparagine) is linked at N100. A helical transmembrane segment spans residues 127-147 (MLGPFTMGIGIFIFICANAIL). Topologically, residues 148–491 (HENRDKETKI…LKRGTSETRF (344 aa)) are cytoplasmic. At S350 the chain carries Phosphoserine.

This sequence belongs to the TMEM200 family. Expressed in cerebellum.

It is found in the membrane. This chain is Transmembrane protein 200A (TMEM200A), found in Homo sapiens (Human).